The sequence spans 372 residues: Queuine tRNA-ribosyltransferase (372 aa).

Asp92 acts as the Proton acceptor in catalysis. Residues 92–96 (DSGGY), Asp146, Gln188, and Gly215 contribute to the substrate site. The segment at 246–252 (GIGTIRE) is RNA binding. Residue Asp265 is the Nucleophile of the active site. Residues 270–274 (TRLGR) are RNA binding; important for wobble base 34 recognition. 4 residues coordinate Zn(2+): Cys303, Cys305, Cys308, and His334.

This sequence belongs to the queuine tRNA-ribosyltransferase family. Homodimer. Within each dimer, one monomer is responsible for RNA recognition and catalysis, while the other monomer binds to the replacement base PreQ1. Zn(2+) serves as cofactor.

The enzyme catalyses 7-aminomethyl-7-carbaguanine + guanosine(34) in tRNA = 7-aminomethyl-7-carbaguanosine(34) in tRNA + guanine. It participates in tRNA modification; tRNA-queuosine biosynthesis. Its function is as follows. Catalyzes the base-exchange of a guanine (G) residue with the queuine precursor 7-aminomethyl-7-deazaguanine (PreQ1) at position 34 (anticodon wobble position) in tRNAs with GU(N) anticodons (tRNA-Asp, -Asn, -His and -Tyr). Catalysis occurs through a double-displacement mechanism. The nucleophile active site attacks the C1' of nucleotide 34 to detach the guanine base from the RNA, forming a covalent enzyme-RNA intermediate. The proton acceptor active site deprotonates the incoming PreQ1, allowing a nucleophilic attack on the C1' of the ribose to form the product. After dissociation, two additional enzymatic reactions on the tRNA convert PreQ1 to queuine (Q), resulting in the hypermodified nucleoside queuosine (7-(((4,5-cis-dihydroxy-2-cyclopenten-1-yl)amino)methyl)-7-deazaguanosine). This Prochlorococcus marinus (strain SARG / CCMP1375 / SS120) protein is Queuine tRNA-ribosyltransferase.